A 319-amino-acid chain; its full sequence is Zinc metalloproteinase/disintegrin (319 aa).

The propeptide occupies 1–28; that stretch reads EDEAPKMCGVTQNWESYEPIKKASQSNL. The region spanning 34–230 is the Peptidase M12B domain; sequence RYIELVIVAD…QKPQCILNKP (197 aa). Glutamate 37 and aspartate 121 together coordinate Ca(2+). Disulfide bonds link cysteine 145-cysteine 225, cysteine 185-cysteine 209, and cysteine 187-cysteine 192. Histidine 170 lines the Zn(2+) pocket. Glutamate 171 is a catalytic residue. Histidine 174 and histidine 180 together coordinate Zn(2+). Ca(2+) is bound by residues cysteine 225 and asparagine 228. Positions 231–246 are excised as a propeptide; that stretch reads LRTDTVSTPVSGNELL. The 82-residue stretch at 238–319 folds into the Disintegrin domain; that stretch reads TPVSGNELLE…AGCPRNPFHA (82 aa). Disulfide bonds link cysteine 252-cysteine 267, cysteine 254-cysteine 262, cysteine 261-cysteine 284, cysteine 275-cysteine 281, cysteine 280-cysteine 305, and cysteine 293-cysteine 312. Residues 297-299 carry the Cell attachment site motif; sequence RGD.

It belongs to the venom metalloproteinase (M12B) family. P-II subfamily. P-IIa sub-subfamily. Monomer. Zn(2+) serves as cofactor. In terms of tissue distribution, expressed by the venom gland.

The protein localises to the secreted. With respect to regulation, excess of calcium ions significantly suppress the autoproteolysis of the enzyme. Functionally, metalloproteinase that impairs hemostasis in the envenomed animal. Shows autoproteolysis dependent on pH and temperature. Does not show hemorrhagic activity. Inhibits platelet aggregation induced by ADP (IC(50) is 200 nM), collagen (IC(50) is 500 nM), thrombin and epinephrin (IC(50) is 300 nM). Does not inhibit aggregation induced by ristocetin. In terms of biological role, inhibits platelet aggregation induced by ADP (IC(50) is 100 nM), collagen (IC(50) is 500 nM), thrombin and epinephrin (IC(50) is 300 nM). Does not inhibit aggregation induced by ristocetin. Significantly inhibits angiogenesis both in vivo and in vitro. In Gloydius brevicauda (Korean slamosa snake), this protein is Zinc metalloproteinase/disintegrin.